Here is a 553-residue protein sequence, read N- to C-terminus: Efflux pump mlcE (553 aa).

Over residues 1–19 the composition is skewed to basic and acidic residues; it reads MSEPLPPKEGEPRPQKEES. The segment at 1–29 is disordered; that stretch reads MSEPLPPKEGEPRPQKEESQNDTLEATES. An N-linked (GlcNAc...) asparagine glycan is attached at asparagine 21. 13 helical membrane passes run 41–61, 77–96, 101–121, 136–156, 164–184, 196–216, 245–265, 273–293, 319–339, 352–372, 376–396, 440–460, and 516–536; these read LVVA…SIIV, VGWY…PLAG, LLGL…GSVL, AVAG…LSTA, VLIG…PLLG, CFYI…VITI, LVGF…LEWG, SSVI…FVLW, LFMG…PIYF, VYML…GFAI, GYYL…AGLV, ALGI…FLDF, and TFYL…GMGW. Asparagine 543 is a glycosylation site (N-linked (GlcNAc...) asparagine).

It belongs to the major facilitator superfamily. TCR/Tet family.

Its subcellular location is the membrane. In terms of biological role, efflux pump; part of the gene cluster that mediates the biosynthesis of compactin, also known as mevastatin or ML-236B, and which acts as a potent competitive inhibitor of HMG-CoA reductase. The protein is Efflux pump mlcE of Penicillium citrinum.